The chain runs to 390 residues: S-adenosylmethionine synthase 1 (390 aa).

Position 9 (E9) interacts with Mg(2+). H15 is an ATP binding site. A K(+)-binding site is contributed by E43. L-methionine is bound by residues E56 and Q99. ATP-binding positions include 167–169, 235–238, D246, 252–253, A269, K273, and K277; these read DGK, SGRF, and RK. D246 provides a ligand contact to L-methionine. K277 is a binding site for L-methionine.

This sequence belongs to the AdoMet synthase family. Homotetramer. Mn(2+) serves as cofactor. The cofactor is Mg(2+). It depends on Co(2+) as a cofactor. K(+) is required as a cofactor.

Its subcellular location is the cytoplasm. It catalyses the reaction L-methionine + ATP + H2O = S-adenosyl-L-methionine + phosphate + diphosphate. It participates in amino-acid biosynthesis; S-adenosyl-L-methionine biosynthesis; S-adenosyl-L-methionine from L-methionine: step 1/1. Functionally, catalyzes the formation of S-adenosylmethionine from methionine and ATP. The reaction comprises two steps that are both catalyzed by the same enzyme: formation of S-adenosylmethionine (AdoMet) and triphosphate, and subsequent hydrolysis of the triphosphate. The protein is S-adenosylmethionine synthase 1 (SAMS1) of Nicotiana tabacum (Common tobacco).